A 163-amino-acid chain; its full sequence is ATP synthase subunit b (163 aa).

A helical transmembrane segment spans residues 13–33 (SFILFVWFCMKYIWPPIIFAI).

It belongs to the ATPase B chain family. In terms of assembly, F-type ATPases have 2 components, F(1) - the catalytic core - and F(0) - the membrane proton channel. F(1) has five subunits: alpha(3), beta(3), gamma(1), delta(1), epsilon(1). F(0) has three main subunits: a(1), b(2) and c(10-14). The alpha and beta chains form an alternating ring which encloses part of the gamma chain. F(1) is attached to F(0) by a central stalk formed by the gamma and epsilon chains, while a peripheral stalk is formed by the delta and b chains.

Its subcellular location is the cell membrane. Its function is as follows. F(1)F(0) ATP synthase produces ATP from ADP in the presence of a proton or sodium gradient. F-type ATPases consist of two structural domains, F(1) containing the extramembraneous catalytic core and F(0) containing the membrane proton channel, linked together by a central stalk and a peripheral stalk. During catalysis, ATP synthesis in the catalytic domain of F(1) is coupled via a rotary mechanism of the central stalk subunits to proton translocation. In terms of biological role, component of the F(0) channel, it forms part of the peripheral stalk, linking F(1) to F(0). The protein is ATP synthase subunit b of Buchnera aphidicola subsp. Schizaphis graminum (strain Sg).